The chain runs to 311 residues: 2-methoxy-6-polyprenyl-1,4-benzoquinol methylase, mitochondrial (311 aa).

The N-terminal 29 residues, 1 to 29 (MAAGLCPGRALLSRRGGALWALLGTARGR), are a transit peptide targeting the mitochondrion. Residues T100, D155, and 183–184 (NA) each bind S-adenosyl-L-methionine.

Belongs to the class I-like SAM-binding methyltransferase superfamily. MenG/UbiE family. Component of a multi-subunit COQ enzyme complex, composed of at least COQ3, COQ4, COQ5, COQ6, COQ7 and COQ9.

Its subcellular location is the mitochondrion inner membrane. It carries out the reaction a 2-methoxy-6-(all-trans-polyprenyl)benzene-1,4-diol + S-adenosyl-L-methionine = a 5-methoxy-2-methyl-3-(all-trans-polyprenyl)benzene-1,4-diol + S-adenosyl-L-homocysteine + H(+). It functions in the pathway cofactor biosynthesis; ubiquinone biosynthesis. Functionally, methyltransferase required for the conversion of 2-polyprenyl-6-methoxy-1,4-benzoquinol (DDMQH2) to 2-polyprenyl-3-methyl-6-methoxy-1,4-benzoquinol (DMQH2). This is 2-methoxy-6-polyprenyl-1,4-benzoquinol methylase, mitochondrial from Gallus gallus (Chicken).